The primary structure comprises 362 residues: sn-glycerol-3-phosphate import ATP-binding protein UgpC (362 aa).

In terms of domain architecture, ABC transporter spans 4 to 235; sequence LTLQSVKKTY…PATVFVASFI (232 aa). An ATP-binding site is contributed by 37 to 44; that stretch reads GPSGCGKS.

This sequence belongs to the ABC transporter superfamily. sn-glycerol-3-phosphate importer (TC 3.A.1.1.3) family. As to quaternary structure, the complex is composed of two ATP-binding proteins (UgpC), two transmembrane proteins (UgpA and UgpE) and a solute-binding protein (UgpB).

It localises to the cell inner membrane. The enzyme catalyses sn-glycerol 3-phosphate(out) + ATP + H2O = sn-glycerol 3-phosphate(in) + ADP + phosphate + H(+). In terms of biological role, part of the ABC transporter complex UgpBAEC involved in sn-glycerol-3-phosphate (G3P) import. Responsible for energy coupling to the transport system. This chain is sn-glycerol-3-phosphate import ATP-binding protein UgpC, found in Paraburkholderia xenovorans (strain LB400).